Reading from the N-terminus, the 243-residue chain is GTP cyclohydrolase 1 (243 aa).

At Thr-15 the chain carries Phosphothreonine. Positions 18–55 (NIRPTSPYTLNPPVERDGFSWPSVGTRQRAEETEEEEK) are disordered. A Phosphoserine modification is found at Ser-23. Cys-132, His-135, and Cys-203 together coordinate Zn(2+).

It belongs to the GTP cyclohydrolase I family. In terms of assembly, homodimer.

It carries out the reaction GTP + H2O = 7,8-dihydroneopterin 3'-triphosphate + formate + H(+). It participates in cofactor biosynthesis; 7,8-dihydroneopterin triphosphate biosynthesis; 7,8-dihydroneopterin triphosphate from GTP: step 1/1. Functionally, GTP cyclohydrolase 1 is the first enzyme in the biosynthetic pathway leading to folic acid. This Saccharomyces cerevisiae (strain ATCC 204508 / S288c) (Baker's yeast) protein is GTP cyclohydrolase 1.